The primary structure comprises 192 residues: Virion infectivity factor (192 aa).

Positions 14–17 are interaction with host APOBEC3F; F1-box; it reads DRMR. The tract at residues 40–44 is interaction with host APOBEC3G; G-box; sequence YRHHF. An interaction with host APOBEC3F and APOBEC3G; FG-box region spans residues 54-72; that stretch reads EVHIPLETAELVITTYWGL. An interaction with host APOBEC3F; F2-box region spans residues 74 to 79; sequence PGEREW. Positions 75-114 are RNA-binding; that stretch reads GEREWHLGQGVSIEWRQGRYRTQIDPGLADQLIHIYYFDC. Thr-96 bears the Phosphothreonine; by host MAP4K1 mark. His-108, Cys-114, Cys-133, and His-139 together coordinate Zn(2+). An HCCH motif motif is present at residues 108 to 139; the sequence is HIYYFDCFSESAIRKAILGHKISPRCNYQAGH. Ser-144 is modified (phosphoserine; by host). The BC-box-like motif signature appears at 144 to 153; the sequence is SLQYLALTAL. The interval 151-164 is multimerization; sequence TALIAPKKTKPPLP. The tract at residues 151–180 is SOCS box-like; the sequence is TALIAPKKTKPPLPSVQKLVEDRWNKPQKT. The tract at residues 164 to 192 is disordered; it reads PSVQKLVEDRWNKPQKTRGHRESHTMNGH. Ser-165 bears the Phosphoserine; by host MAP4K1 mark. Positions 171–172 are membrane association; it reads ED. A compositionally biased stretch (basic and acidic residues) spans 183 to 192; sequence HRESHTMNGH. Thr-188 is subject to Phosphothreonine; by host.

It belongs to the primate lentivirus group Vif protein family. In terms of assembly, homomultimer; in vitro and presumably in vivo. Interacts with viral RNA and Pr55Gag precursor; these interactions mediate Vif incorporation into the virion. Interacts with the viral reverse transcriptase. Forms cullin-5-RING E3 ubiquitin-protein ligase complex (ECS complex) by interacting with host CUL5, RBX2, elongin BC complex (ELOB and ELOC) and CBFB/CBF-beta. Within the ECS complex, Vif interacts directly with host CUL5, ELOC and APOBEC (APOBEC3F and APOBEC3G) substrates. The ECS complex also contains some single-stranded RNA (ssRNA) that acts as a glue that bridges Vif with APOBEC (APOBEC3F and APOBEC3G) substrates. Interacts with host UBCE7IP1 isoform 3/ZIN and possibly with SAT. Interacts with host tyrosine kinases HCK and FYN; these interactions may decrease level of phosphorylated APOBEC3G incorporation into virions. Interacts with host ABCE1; this interaction may play a role in protecting viral RNA from damage during viral assembly. Interacts with host MDM2; this interaction targets Vif for degradation by the proteasome. In terms of processing, processed in virion by the viral protease. Post-translationally, highly phosphorylated on serine and threonine residues. Polyubiquitinated and degraded by the proteasome in the presence of APOBEC3G.

It is found in the host cytoplasm. It localises to the host cell membrane. Its subcellular location is the virion. In terms of biological role, counteracts the innate antiviral activity of host APOBEC3F and APOBEC3G by promoting their ubiquitination and degradation. Acts as a substrate recognition component of an E3 ubiquitin-protein ligase complex: mechanistically, Vif hijacks a host cullin-5-RING E3 ubiquitin-protein ligase complex (ECS complex) and the transcription coactivator CBFB/CBF-beta to form an active E3 ubiquitin-protein ligase complex that targets APOBEC3G and APOBEC3F for polyubiquitination, leading to their degradation by the proteasome. Vif interaction with APOBEC3G also blocks its cytidine deaminase activity in a proteasome-independent manner, suggesting a dual inhibitory mechanism. May interact directly with APOBEC3G mRNA in order to inhibit its translation. Association with CBFB/CBF-beta also inhibits the transcription coactivator activity of CBFB/CBF-beta. Seems to play a role in viral morphology by affecting the stability of the viral nucleoprotein core. Finally, Vif also contributes to the G2 cell cycle arrest observed in HIV infected cells. In Homo sapiens (Human), this protein is Virion infectivity factor.